The primary structure comprises 200 residues: THO complex subunit tho5 (200 aa).

The protein belongs to the THOC5 family. Component of the THO and TREX complexes.

It is found in the cytoplasm. The protein resides in the nucleus. Component the THO subcomplex of the TREX complex, which operates in coupling transcription elongation to mRNA export. The THO complex is recruited to transcribed genes and moves along the gene with the elongating polymerase during transcription. THO is important for stabilizing nascent RNA in the RNA polymerase II elongation complex by preventing formation of DNA:RNA hybrids behind the elongating polymerase. The THO complex is also required to maintain TRAMP complex occupancy at sites of snoRNA transcription thus promoting exosome-mediated degradation of snoRNA precursors. The chain is THO complex subunit tho5 from Schizosaccharomyces pombe (strain 972 / ATCC 24843) (Fission yeast).